Consider the following 163-residue polypeptide: Nucleotide-binding protein Tery_2743 (163 aa).

It belongs to the YajQ family.

Functionally, nucleotide-binding protein. The polypeptide is Nucleotide-binding protein Tery_2743 (Trichodesmium erythraeum (strain IMS101)).